Here is a 270-residue protein sequence, read N- to C-terminus: ATP synthase subunit a (270 aa).

The next 6 membrane-spanning stretches (helical) occupy residues 27 to 47, 90 to 110, 147 to 166, 182 to 202, 211 to 231, and 238 to 258; these read FWTFHVDTLAWSVVLGLVFIL, IAPLALTIFVWVLLMNLMDLI, VNMTFALSLGVFALMIFYSV, PFNTPWLYWFNFILELVSLIA, LFGNLYAGELIFILIAGTLGV, and FLWAAFHLLVIPLQAFIFMML.

It belongs to the ATPase A chain family. F-type ATPases have 2 components, CF(1) - the catalytic core - and CF(0) - the membrane proton channel. CF(1) has five subunits: alpha(3), beta(3), gamma(1), delta(1), epsilon(1). CF(0) has three main subunits: a(1), b(2) and c(9-12). The alpha and beta chains form an alternating ring which encloses part of the gamma chain. CF(1) is attached to CF(0) by a central stalk formed by the gamma and epsilon chains, while a peripheral stalk is formed by the delta and b chains.

The protein resides in the cell inner membrane. Key component of the proton channel; it plays a direct role in the translocation of protons across the membrane. This is ATP synthase subunit a from Pseudoalteromonas atlantica (strain T6c / ATCC BAA-1087).